The chain runs to 347 residues: GMP reductase (347 aa).

108–131 (ADFDKMKQILALSPSLKFICIDVA) contributes to the NADP(+) binding site. Gly-181 and Gly-183 together coordinate K(+). The active-site Thioimidate intermediate is the Cys-186. 216 to 239 (IVSDGGCSVPGDVAKAFGGGADFV) contributes to the NADP(+) binding site.

This sequence belongs to the IMPDH/GMPR family. GuaC type 1 subfamily. Homotetramer.

It catalyses the reaction IMP + NH4(+) + NADP(+) = GMP + NADPH + 2 H(+). Its function is as follows. Catalyzes the irreversible NADPH-dependent deamination of GMP to IMP. It functions in the conversion of nucleobase, nucleoside and nucleotide derivatives of G to A nucleotides, and in maintaining the intracellular balance of A and G nucleotides. The polypeptide is GMP reductase (Yersinia pestis bv. Antiqua (strain Antiqua)).